The sequence spans 317 residues: UV DNA damage endonuclease (317 aa).

The protein belongs to the uve1/UvsE family.

Functionally, component in a DNA repair pathway. Removal of UV LIGHT damaged nucleotides. Recognizes pyrimidine dimers and cleave a phosphodiester bond immediately 5' to the lesion. This chain is UV DNA damage endonuclease, found in Bacillus mycoides (strain KBAB4) (Bacillus weihenstephanensis).